The following is a 261-amino-acid chain: Indole-3-glycerol phosphate synthase (261 aa).

It belongs to the TrpC family.

It carries out the reaction 1-(2-carboxyphenylamino)-1-deoxy-D-ribulose 5-phosphate + H(+) = (1S,2R)-1-C-(indol-3-yl)glycerol 3-phosphate + CO2 + H2O. It participates in amino-acid biosynthesis; L-tryptophan biosynthesis; L-tryptophan from chorismate: step 4/5. This chain is Indole-3-glycerol phosphate synthase, found in Burkholderia multivorans (strain ATCC 17616 / 249).